The chain runs to 290 residues: HTH-type transcriptional activator RhaR (290 aa).

One can recognise an HTH araC/xylS-type domain in the interval 179 to 277 (DLIMSALQQS…GMTPRDYRQR (99 aa)). 2 DNA-binding regions (H-T-H motif) span residues 196–217 (ADFC…RQQT) and 244–267 (ISDI…TREA).

As to quaternary structure, binds DNA as a dimer.

It is found in the cytoplasm. Functionally, activates expression of the rhaSR operon in response to L-rhamnose. The protein is HTH-type transcriptional activator RhaR of Yersinia pseudotuberculosis serotype O:1b (strain IP 31758).